The sequence spans 513 residues: ATP synthase subunit alpha (513 aa).

An ATP-binding site is contributed by 169 to 176; that stretch reads GDRQTGKT.

The protein belongs to the ATPase alpha/beta chains family. F-type ATPases have 2 components, CF(1) - the catalytic core - and CF(0) - the membrane proton channel. CF(1) has five subunits: alpha(3), beta(3), gamma(1), delta(1), epsilon(1). CF(0) has three main subunits: a(1), b(2) and c(9-12). The alpha and beta chains form an alternating ring which encloses part of the gamma chain. CF(1) is attached to CF(0) by a central stalk formed by the gamma and epsilon chains, while a peripheral stalk is formed by the delta and b chains.

The protein localises to the cell inner membrane. The catalysed reaction is ATP + H2O + 4 H(+)(in) = ADP + phosphate + 5 H(+)(out). Its function is as follows. Produces ATP from ADP in the presence of a proton gradient across the membrane. The alpha chain is a regulatory subunit. This is ATP synthase subunit alpha from Bordetella bronchiseptica (strain ATCC BAA-588 / NCTC 13252 / RB50) (Alcaligenes bronchisepticus).